The following is a 218-amino-acid chain: N-(5'-phosphoribosyl)anthranilate isomerase (218 aa).

Belongs to the TrpF family.

The enzyme catalyses N-(5-phospho-beta-D-ribosyl)anthranilate = 1-(2-carboxyphenylamino)-1-deoxy-D-ribulose 5-phosphate. It participates in amino-acid biosynthesis; L-tryptophan biosynthesis; L-tryptophan from chorismate: step 3/5. The sequence is that of N-(5'-phosphoribosyl)anthranilate isomerase from Bacillus licheniformis (strain ATCC 14580 / DSM 13 / JCM 2505 / CCUG 7422 / NBRC 12200 / NCIMB 9375 / NCTC 10341 / NRRL NRS-1264 / Gibson 46).